We begin with the raw amino-acid sequence, 335 residues long: Lipase chaperone (335 aa).

Residues 7–23 (LLPLAIALGLGFFIARP) traverse the membrane as a helical segment.

It belongs to the lipase chaperone family.

The protein resides in the cell inner membrane. In terms of biological role, may be involved in the folding of the extracellular lipase during its passage through the periplasm. The chain is Lipase chaperone (lifO) from Ectopseudomonas mendocina (Pseudomonas mendocina).